The sequence spans 251 residues: MPRLEEHCWSCSCSTSVKTKDLSSAGWIVCKTGEMMSIITSVLSHAYGSLHSLQSANLIRRGLVLFIVGVVLALVLNLLQIQRNVTLFPEEVLDTLFSSAWWIPLCCGTAAAVVGLLYPCLDHHLGEPHKFKREWASVMRCIAVFVGINHASAKLDFANNVQLSLTLAALSLGLWWTFDRSRSGFGLGLTTALLATLIAQLLVYNGIYQYTSPDFLYVRSWLPCIFFSGGVTVGNIGRQLAMGSTEKIHND.

The Cytoplasmic portion of the chain corresponds to 1–58; the sequence is MPRLEEHCWSCSCSTSVKTKDLSSAGWIVCKTGEMMSIITSVLSHAYGSLHSLQSANL. Residues 59 to 81 traverse the membrane as a helical segment; the sequence is IRRGLVLFIVGVVLALVLNLLQI. The Extracellular segment spans residues 82–100; the sequence is QRNVTLFPEEVLDTLFSSA. Residues 101 to 118 form a helical membrane-spanning segment; the sequence is WWIPLCCGTAAAVVGLLY. The Cytoplasmic portion of the chain corresponds to 119–133; that stretch reads PCLDHHLGEPHKFKR. Residues 134-156 form a helical membrane-spanning segment; that stretch reads EWASVMRCIAVFVGINHASAKLD. Over 157–159 the chain is Extracellular; it reads FAN. The helical transmembrane segment at 160–178 threads the bilayer; it reads NVQLSLTLAALSLGLWWTF. The Cytoplasmic portion of the chain corresponds to 179 to 183; that stretch reads DRSRS. A helical transmembrane segment spans residues 184–205; it reads GFGLGLTTALLATLIAQLLVYN. Residues 206–219 lie on the Extracellular side of the membrane; the sequence is GIYQYTSPDFLYVR. Residues 220–237 form a helical membrane-spanning segment; it reads SWLPCIFFSGGVTVGNIG. The Cytoplasmic segment spans residues 238–251; it reads RQLAMGSTEKIHND. Positions 245–251 match the KxHxx motif; sequence TEKIHND.

It belongs to the INSIG family. In terms of assembly, interacts with scap; interaction is direct and only takes place in the presence of sterols; it prevents interaction between scap and the coat protein complex II (COPII). Associates with the SCAP-SREBP complex; association is mediated via its interaction with scap and only takes place in the presence of sterols.

The protein resides in the endoplasmic reticulum membrane. Functionally, oxysterol-binding protein that mediates feedback control of cholesterol synthesis by controlling both endoplasmic reticulum to Golgi transport of scap and degradation of hmgcr. Acts as a negative regulator of cholesterol biosynthesis by mediating the retention of the SCAP-SREBP complex in the endoplasmic reticulum, thereby blocking the processing of sterol regulatory element-binding proteins (SREBPs). Binds oxysterol, including 25-hydroxycholesterol, regulating interaction with scap and retention of the SCAP-SREBP complex in the endoplasmic reticulum. In presence of oxysterol, interacts with scap, retaining the SCAP-SREBP complex in the endoplasmic reticulum, thereby preventing scap from escorting SREBPs to the Golgi. Sterol deprivation reduces oxysterol-binding, disrupting the interaction between insig1 and scap, thereby promoting Golgi transport of the SCAP-SREBP complex, followed by processing and nuclear translocation of SREBPs. Also regulates cholesterol synthesis by regulating degradation of hmgcr. This chain is Insulin-induced gene 1 protein, found in Danio rerio (Zebrafish).